The sequence spans 669 residues: MSKVFKLHSDFQPGGDQPEAIRQLQEGLEDGLAHQTLLGVTGSGKTFTVANVIANLNRPTMVLAPNKTLAAQLYSEMKDFFPENSVEYFVSYYDYYQPEAYVPSSDTFIEKDASVNEHIEQMRLSATKALLERRDVIVVASVSAIYGLGDPDSYLKMMLHLTNGMMIDQRSILRRLAELQYTRNDQAFQRGTFRVRGEVIDIFPAESDEHALRVELFDDEVERLSLFDPLTGQVQYHVPRYTVYPKTHYVTPRERIIQAMEAIKIELEQRRKVLLANGKLLEEQRITQRTQFDLEMMNELGYCSGIENYSRYLSGRTEGEPPPTLFDYLPADGLLVVDESHVTIPQIGGMYRGDRSRKETLVEYGFRMPSALDNRPLRFEEFEALAPQTIYISATPGKYELEKSSGDVVEQVVRPTGLLDPEVEVRPVATQVDDLLSEIRIRAVKNERVLVTTLTKRMAEDLTEYLEEHGERVRYLHSDIDTVERVEIIRDLRLGEFDVLVGINLLREGLDMPEVSLVAILDADKEGFLRSERSLIQTIGRAARNLHGKAILYGDKITDSMAKAIGETERRRAKQQIFNEKHGIVPKGLNKKINDILQIGQPAGGKRKGRGKAVATAETFSNLSAKELESKIRELEAKMYQHAQDLEFEQAASVRDQVQALREQFIANF.

A Helicase ATP-binding domain is found at 26–414 (EGLEDGLAHQ…SGDVVEQVVR (389 aa)). Residue 39–46 (GVTGSGKT) coordinates ATP. The Beta-hairpin motif lies at 92–115 (YYDYYQPEAYVPSSDTFIEKDASV). One can recognise a Helicase C-terminal domain in the interval 431–597 (QVDDLLSEIR…GLNKKINDIL (167 aa)). Residues 629 to 664 (ESKIRELEAKMYQHAQDLEFEQAASVRDQVQALREQ) form the UVR domain.

Belongs to the UvrB family. As to quaternary structure, forms a heterotetramer with UvrA during the search for lesions. Interacts with UvrC in an incision complex.

Its subcellular location is the cytoplasm. The UvrABC repair system catalyzes the recognition and processing of DNA lesions. A damage recognition complex composed of 2 UvrA and 2 UvrB subunits scans DNA for abnormalities. Upon binding of the UvrA(2)B(2) complex to a putative damaged site, the DNA wraps around one UvrB monomer. DNA wrap is dependent on ATP binding by UvrB and probably causes local melting of the DNA helix, facilitating insertion of UvrB beta-hairpin between the DNA strands. Then UvrB probes one DNA strand for the presence of a lesion. If a lesion is found the UvrA subunits dissociate and the UvrB-DNA preincision complex is formed. This complex is subsequently bound by UvrC and the second UvrB is released. If no lesion is found, the DNA wraps around the other UvrB subunit that will check the other stand for damage. The chain is UvrABC system protein B from Photorhabdus laumondii subsp. laumondii (strain DSM 15139 / CIP 105565 / TT01) (Photorhabdus luminescens subsp. laumondii).